The sequence spans 479 residues: Glycine betaine methyltransferase (479 aa).

It belongs to the trimethylamine methyltransferase family.

The catalysed reaction is Co(I)-[glycine betaine-specific corrinoid protein] + glycine betaine + H(+) = methyl-Co(III)-[glycine betaine-specific corrinoid protein] + N,N-dimethylglycine. In terms of biological role, methyltransferase able to methylate free cob(I)alamin in vitro, using glycine betaine as the methyl donor, yealding methylcobalamin (methylCbl) and dimethylglycine. In vivo, probably carries out the methylation of a corrinoid protein, likely the adjacently encoded DSY3155, with glycine betaine, to then supply methyl groups to tetrahydrofolate (THF) for ultimate conversion to carbon dioxide; oxidation of the methyl group would also provide reducing equivalents for anaerobic respiration. Thus, may function in the pathway that allows anaerobic methylotrophic growth of D.hafniense using glycine betaine. Cannot use quaternary amines such as carnitine and choline as substrates, nor tertiary amines such as dimethylglycine or trimethylamine. The polypeptide is Glycine betaine methyltransferase (Desulfitobacterium hafniense (strain Y51)).